A 409-amino-acid chain; its full sequence is Peptidase T (409 aa).

Position 78 (histidine 78) interacts with Zn(2+). Residue aspartate 80 is part of the active site. Residue aspartate 140 participates in Zn(2+) binding. Catalysis depends on glutamate 173, which acts as the Proton acceptor. Zn(2+)-binding residues include glutamate 174, aspartate 196, and histidine 379.

It belongs to the peptidase M20B family. The cofactor is Zn(2+).

It is found in the cytoplasm. The enzyme catalyses Release of the N-terminal residue from a tripeptide.. In terms of biological role, cleaves the N-terminal amino acid of tripeptides. The chain is Peptidase T from Escherichia coli O139:H28 (strain E24377A / ETEC).